Consider the following 318-residue polypeptide: D-alanine--D-alanine ligase B (318 aa).

The region spanning 116–311 (KQVWQSLGIP…FQQLVLAILA (196 aa)) is the ATP-grasp domain. 142–197 (STELGFPLIVKPAHEGSSIGMAKVNSTQELVAAWQDAAKYDSQVLVEQWIHGPEFT) lines the ATP pocket. Residues Asp265, Glu278, and Asn280 each contribute to the Mg(2+) site.

The protein belongs to the D-alanine--D-alanine ligase family. It depends on Mg(2+) as a cofactor. The cofactor is Mn(2+).

It is found in the cytoplasm. It carries out the reaction 2 D-alanine + ATP = D-alanyl-D-alanine + ADP + phosphate + H(+). It participates in cell wall biogenesis; peptidoglycan biosynthesis. Cell wall formation. The protein is D-alanine--D-alanine ligase B of Pseudomonas putida (strain ATCC 47054 / DSM 6125 / CFBP 8728 / NCIMB 11950 / KT2440).